A 117-amino-acid chain; its full sequence is Large ribosomal subunit protein bL20 (117 aa).

The protein belongs to the bacterial ribosomal protein bL20 family.

Binds directly to 23S ribosomal RNA and is necessary for the in vitro assembly process of the 50S ribosomal subunit. It is not involved in the protein synthesizing functions of that subunit. The chain is Large ribosomal subunit protein bL20 from Leptospira borgpetersenii serovar Hardjo-bovis (strain JB197).